The following is an 87-amino-acid chain: Small ribosomal subunit protein uS15c (87 aa).

It belongs to the universal ribosomal protein uS15 family. Part of the 30S ribosomal subunit.

It localises to the plastid. The protein resides in the chloroplast. This is Small ribosomal subunit protein uS15c (rps15) from Oenothera biennis (German evening primrose).